The chain runs to 121 residues: Small ribosomal subunit protein uS13 (121 aa).

Residues 93–121 (RGLPVRGQNTKNNARTRKGKATAIAGKKK) are disordered. Residues 106-121 (ARTRKGKATAIAGKKK) are compositionally biased toward basic residues.

Belongs to the universal ribosomal protein uS13 family. Part of the 30S ribosomal subunit. Forms a loose heterodimer with protein S19. Forms two bridges to the 50S subunit in the 70S ribosome.

Its function is as follows. Located at the top of the head of the 30S subunit, it contacts several helices of the 16S rRNA. In the 70S ribosome it contacts the 23S rRNA (bridge B1a) and protein L5 of the 50S subunit (bridge B1b), connecting the 2 subunits; these bridges are implicated in subunit movement. Contacts the tRNAs in the A and P-sites. The polypeptide is Small ribosomal subunit protein uS13 (Streptococcus uberis (strain ATCC BAA-854 / 0140J)).